We begin with the raw amino-acid sequence, 276 residues long: Large ribosomal subunit protein uL2 (276 aa).

The interval 203–276 is disordered; it reads NVSSGKAGRT…SDKFIVKRRK (74 aa). Basic residues predominate over residues 210 to 220; that stretch reads GRTRWLGRRPQ. Positions 265–276 are enriched in basic and acidic residues; that stretch reads KPSDKFIVKRRK.

This sequence belongs to the universal ribosomal protein uL2 family. Part of the 50S ribosomal subunit. Forms a bridge to the 30S subunit in the 70S ribosome.

In terms of biological role, one of the primary rRNA binding proteins. Required for association of the 30S and 50S subunits to form the 70S ribosome, for tRNA binding and peptide bond formation. It has been suggested to have peptidyltransferase activity; this is somewhat controversial. Makes several contacts with the 16S rRNA in the 70S ribosome. In Coprothermobacter proteolyticus (strain ATCC 35245 / DSM 5265 / OCM 4 / BT), this protein is Large ribosomal subunit protein uL2.